The sequence spans 62 residues: Large ribosomal subunit protein uL30 (62 aa).

This sequence belongs to the universal ribosomal protein uL30 family. As to quaternary structure, part of the 50S ribosomal subunit.

This chain is Large ribosomal subunit protein uL30, found in Cereibacter sphaeroides (strain ATCC 17029 / ATH 2.4.9) (Rhodobacter sphaeroides).